The chain runs to 461 residues: MNLQIIILAAGQGKRMYSDTPKVLHHLAGKPLLTHVVETAQQLNPDAIHVIYGHGGEQIKSSLPNLPVHWVHQAEQLGTGHAVLQAMPHIPDDAYVLVLSADVPLIQVGTLQSLIECSQRQNPDHSVLALLVAELENPSGLGRIIRNNQGEIYSIVEEKDANEQVKNIKEIYSGVCCTLANNLKKWLPQLSNSNAQGEYYLTEIISLAVQNKTPITSLTAKNSFEVQGINNRQQLQQLERIWQQRAANQLMEKGATLADANRFDLRGELYCGKDVYIDINCIFTGTVVLGNGCKIGPNCSLTNVTLGDGCEVYANSVLEGCHIANDCHIGPFARLRSGTQLASHCKIGNFVETKKAIFDEGTKASHLSYLGDVLLGKNVNVGAGTITCNYDGVNKHQTIIEDGVFIGSDTQLVAPVTVGANATIGAGSTIRRNVPPDELTLTESRQKTIYGWKRPVKRERD.

Positions 1 to 232 (MNLQIIILAA…SFEVQGINNR (232 aa)) are pyrophosphorylase. UDP-N-acetyl-alpha-D-glucosamine contacts are provided by residues 8–11 (LAAG), K22, Q73, and 78–79 (GT). D102 contacts Mg(2+). Residues G142, E157, and N230 each coordinate UDP-N-acetyl-alpha-D-glucosamine. N230 is a binding site for Mg(2+). The segment at 233–253 (QQLQQLERIWQQRAANQLMEK) is linker. The segment at 254 to 461 (GATLADANRF…WKRPVKRERD (208 aa)) is N-acetyltransferase. Residues R336 and K354 each coordinate UDP-N-acetyl-alpha-D-glucosamine. H366 (proton acceptor) is an active-site residue. UDP-N-acetyl-alpha-D-glucosamine is bound by residues Y369 and N380. Acetyl-CoA-binding positions include A383, 389-390 (NY), S408, and A426.

It in the N-terminal section; belongs to the N-acetylglucosamine-1-phosphate uridyltransferase family. This sequence in the C-terminal section; belongs to the transferase hexapeptide repeat family. As to quaternary structure, homotrimer. The cofactor is Mg(2+).

It is found in the cytoplasm. It carries out the reaction alpha-D-glucosamine 1-phosphate + acetyl-CoA = N-acetyl-alpha-D-glucosamine 1-phosphate + CoA + H(+). The catalysed reaction is N-acetyl-alpha-D-glucosamine 1-phosphate + UTP + H(+) = UDP-N-acetyl-alpha-D-glucosamine + diphosphate. It functions in the pathway nucleotide-sugar biosynthesis; UDP-N-acetyl-alpha-D-glucosamine biosynthesis; N-acetyl-alpha-D-glucosamine 1-phosphate from alpha-D-glucosamine 6-phosphate (route II): step 2/2. The protein operates within nucleotide-sugar biosynthesis; UDP-N-acetyl-alpha-D-glucosamine biosynthesis; UDP-N-acetyl-alpha-D-glucosamine from N-acetyl-alpha-D-glucosamine 1-phosphate: step 1/1. Its pathway is bacterial outer membrane biogenesis; LPS lipid A biosynthesis. Its function is as follows. Catalyzes the last two sequential reactions in the de novo biosynthetic pathway for UDP-N-acetylglucosamine (UDP-GlcNAc). The C-terminal domain catalyzes the transfer of acetyl group from acetyl coenzyme A to glucosamine-1-phosphate (GlcN-1-P) to produce N-acetylglucosamine-1-phosphate (GlcNAc-1-P), which is converted into UDP-GlcNAc by the transfer of uridine 5-monophosphate (from uridine 5-triphosphate), a reaction catalyzed by the N-terminal domain. This is Bifunctional protein GlmU from Legionella pneumophila (strain Corby).